The following is a 214-amino-acid chain: Dual specificity phosphatase 29 (214 aa).

One can recognise a Tyrosine-protein phosphatase domain in the interval His-46–Leu-194. Residue His-138 to Arg-145 participates in substrate binding. The Phosphocysteine intermediate role is filled by Cys-139.

It belongs to the protein-tyrosine phosphatase family. Non-receptor class dual specificity subfamily.

It is found in the cytoplasm. It localises to the nucleus. The enzyme catalyses O-phospho-L-tyrosyl-[protein] + H2O = L-tyrosyl-[protein] + phosphate. The catalysed reaction is O-phospho-L-seryl-[protein] + H2O = L-seryl-[protein] + phosphate. It catalyses the reaction O-phospho-L-threonyl-[protein] + H2O = L-threonyl-[protein] + phosphate. Dual specificity phosphatase able to dephosphorylate phosphotyrosine, phosphoserine and phosphothreonine residues within the same substrate, with a preference for phosphotyrosine as a substrate. Involved in the modulation of AMPK and MAPK1/2 signaling pathways. This Gallus gallus (Chicken) protein is Dual specificity phosphatase 29 (DUSP29).